The sequence spans 116 residues: Evasin P1180 (116 aa).

Residues 1–25 form the signal peptide; the sequence is MARNWSFRVIFVSAMWCALLKFATL. 4 disulfide bridges follow: cysteine 38-cysteine 58, cysteine 54-cysteine 95, cysteine 71-cysteine 100, and cysteine 90-cysteine 109. 3 N-linked (GlcNAc...) asparagine glycosylation sites follow: asparagine 45, asparagine 73, and asparagine 104.

It localises to the secreted. Its function is as follows. Salivary chemokine-binding protein which binds to host chemokines CCL2, CCL3, CCL4, CCL8 and CCL18. The protein is Evasin P1180 of Amblyomma triste (Neotropical tick).